A 178-amino-acid chain; its full sequence is Large ribosomal subunit protein bL25 (178 aa).

It belongs to the bacterial ribosomal protein bL25 family. CTC subfamily. As to quaternary structure, part of the 50S ribosomal subunit; part of the 5S rRNA/L5/L18/L25 subcomplex. Contacts the 5S rRNA. Binds to the 5S rRNA independently of L5 and L18.

Its function is as follows. This is one of the proteins that binds to the 5S RNA in the ribosome where it forms part of the central protuberance. This Helicobacter pylori (strain J99 / ATCC 700824) (Campylobacter pylori J99) protein is Large ribosomal subunit protein bL25.